Reading from the N-terminus, the 89-residue chain is Strongylocin 2 (89 aa).

The first 22 residues, 1–22 (MNIRTASFTFIVVMMILSQTMA), serve as a signal peptide directing secretion. A propeptide spanning residues 23–38 (DRFFNEPEEDDHLVES) is cleaved from the precursor. Position 39 is a 6'-bromotryptophan (Trp39).

In terms of processing, contains 3 disulfide bonds.

Has antimicrobial activity against Gram-negative bacteria and Gram-positive bacteria with minimum inhibitory concentration (MIC) between 0.78 uM and 3.13 uM. The sequence is that of Strongylocin 2 from Echinus esculentus (Sea urchin).